Here is a 701-residue protein sequence, read N- to C-terminus: Glycine--tRNA ligase beta subunit (701 aa).

The protein belongs to the class-II aminoacyl-tRNA synthetase family. In terms of assembly, tetramer of two alpha and two beta subunits.

It is found in the cytoplasm. The catalysed reaction is tRNA(Gly) + glycine + ATP = glycyl-tRNA(Gly) + AMP + diphosphate. This Anaeromyxobacter dehalogenans (strain 2CP-1 / ATCC BAA-258) protein is Glycine--tRNA ligase beta subunit.